A 160-amino-acid chain; its full sequence is SsrA-binding protein (160 aa).

This sequence belongs to the SmpB family.

Its subcellular location is the cytoplasm. Functionally, required for rescue of stalled ribosomes mediated by trans-translation. Binds to transfer-messenger RNA (tmRNA), required for stable association of tmRNA with ribosomes. tmRNA and SmpB together mimic tRNA shape, replacing the anticodon stem-loop with SmpB. tmRNA is encoded by the ssrA gene; the 2 termini fold to resemble tRNA(Ala) and it encodes a 'tag peptide', a short internal open reading frame. During trans-translation Ala-aminoacylated tmRNA acts like a tRNA, entering the A-site of stalled ribosomes, displacing the stalled mRNA. The ribosome then switches to translate the ORF on the tmRNA; the nascent peptide is terminated with the 'tag peptide' encoded by the tmRNA and targeted for degradation. The ribosome is freed to recommence translation, which seems to be the essential function of trans-translation. This chain is SsrA-binding protein, found in Escherichia coli O139:H28 (strain E24377A / ETEC).